The following is a 575-amino-acid chain: Hemagglutinin-neuraminidase (575 aa).

Over residues 1–10 (MDGDRSKRDS) the composition is skewed to basic and acidic residues. Residues 1-25 (MDGDRSKRDSYWSTSPGGSTTKLVS) form a disordered region. Residues 1–37 (MDGDRSKRDSYWSTSPGGSTTKLVSDSERSGKVDTWL) are Intravirion-facing. The interval 10–14 (SYWST) is incorporation in virion. A compositionally biased stretch (polar residues) spans 11 to 24 (YWSTSPGGSTTKLV). Residues 38-58 (LILAFTQWALSIATVIICIVI) traverse the membrane as a helical segment. The involved in interaction with F protein stretch occupies residues 59 to 140 (AARQGYSMER…RQELTQLCDS (82 aa)). At 59–575 (AARQGYSMER…SIPKLCKAES (517 aa)) the chain is on the virion surface side. The N-linked (GlcNAc...) asparagine; by host glycan is linked to N77. Cystine bridges form between C192-C216, C258-C271, C357-C469, and C463-C473. Residues 254-259 (NRKSCS) form an involved in neuraminidase activity region. Residues N499 and N511 are each glycosylated (N-linked (GlcNAc...) asparagine; by host). A disulfide bridge connects residues C535 and C544.

It belongs to the paramyxoviruses hemagglutinin-neuraminidase family. As to quaternary structure, homotetramer; composed of disulfide-linked homodimers. Interacts with F protein trimer. Post-translationally, N-glycosylated; glycans consist of a mixture of high mannose-type oligosaccharides and of complex-type oligosaccharides.

The protein localises to the virion membrane. It localises to the host cell membrane. It catalyses the reaction Hydrolysis of alpha-(2-&gt;3)-, alpha-(2-&gt;6)-, alpha-(2-&gt;8)- glycosidic linkages of terminal sialic acid residues in oligosaccharides, glycoproteins, glycolipids, colominic acid and synthetic substrates.. Its function is as follows. Attaches the virus to sialic acid-containing cell receptors and thereby initiating infection. Binding of HN protein to the receptor induces a conformational change that allows the F protein to trigger virion/cell membranes fusion. Neuraminidase activity ensures the efficient spread of the virus by dissociating the mature virions from the neuraminic acid containing glycoproteins. The chain is Hemagglutinin-neuraminidase (HN) from Cavia cutleri (Guinea pig).